Consider the following 309-residue polypeptide: NAD kinase (309 aa).

The active-site Proton acceptor is the Asp89. NAD(+)-binding positions include 89–90 (DG), 163–164 (NE), His174, Arg191, Asp193, and 204–209 (TAYALS).

Belongs to the NAD kinase family. A divalent metal cation is required as a cofactor.

Its subcellular location is the cytoplasm. The catalysed reaction is NAD(+) + ATP = ADP + NADP(+) + H(+). Functionally, involved in the regulation of the intracellular balance of NAD and NADP, and is a key enzyme in the biosynthesis of NADP. Catalyzes specifically the phosphorylation on 2'-hydroxyl of the adenosine moiety of NAD to yield NADP. This chain is NAD kinase, found in Shewanella baltica (strain OS155 / ATCC BAA-1091).